The primary structure comprises 64 residues: DNA gyrase inhibitor YacG (64 aa).

Zn(2+) contacts are provided by C9, C12, C28, and C32. A disordered region spans residues 42–64 (DEENAIPGAPDMSDSDGWSEEQY). A compositionally biased stretch (acidic residues) spans 54–64 (SDSDGWSEEQY).

The protein belongs to the DNA gyrase inhibitor YacG family. As to quaternary structure, interacts with GyrB. The cofactor is Zn(2+).

Its function is as follows. Inhibits all the catalytic activities of DNA gyrase by preventing its interaction with DNA. Acts by binding directly to the C-terminal domain of GyrB, which probably disrupts DNA binding by the gyrase. The sequence is that of DNA gyrase inhibitor YacG from Vibrio vulnificus (strain YJ016).